Reading from the N-terminus, the 189-residue chain is Apolipoprotein D (189 aa).

Residues 1-20 (MVTMLMFLATLAGLFTTAKG) form the signal peptide. Gln-21 is modified (pyrrolidone carboxylic acid). Cystine bridges form between Cys-28-Cys-134 and Cys-61-Cys-185. Asn-65 and Asn-98 each carry an N-linked (GlcNAc...) asparagine glycan.

Belongs to the calycin superfamily. Lipocalin family. As to quaternary structure, homodimer. Highest levels of expression in brain, testis, virgin mammary gland and salivary gland. Moderate levels in skeletal muscle, lactating mammary gland and thymus. Low levels in lung and lymph node. No expression in kidney, pancreas, liver or spleen.

It localises to the secreted. Its function is as follows. APOD occurs in the macromolecular complex with lecithin-transport and binding of bilin. Appears to be able to transport a variety of ligands in a number of different contexts. This Mus musculus (Mouse) protein is Apolipoprotein D (Apod).